We begin with the raw amino-acid sequence, 657 residues long: MGLLETVKDPRDLAKLSGTELEQLAGEIREFLITNVAATGGHLGPNLGVVELTLAVHRNFDSPRDSIVFDTGHQSYVHKLLTGRQDFTTLRQQGGLSGYPDRAESEHDIVESSHASSSLSWADGISRARQLTGEGDRFVVAVVGDGALTGGMAWEAINNIAADKRRRVVIVVNDNGRSYAPTVGGFADYLASLRPTIDSLRTTPAYERMLDWWKKKLQDGGPAGQFTYKSLHAMKKGIKDWWAPQGMFEDLGMKYIGPVDGHNLQAMEHALNTAKAYGGPVIVHAMTEKGHGYAPALANEADQFHAVGIIDPETGEPTEMSGARSWTSVFAEEIADIADERSDIVGITGAMLIPVGLHKFAERHPERVIDVGIAEQHALTSAAGMAFGGLHPVVAVYATFLNRAFDQLLMDVALHKAGVTIVLDRAGVTGPDGPSHHGMWDMAMVQIVPGLHLAAPRDATRLREELREAVAINDAPTVVRFSKGSVGSEIEAIDRLHDGVDILARRPDGSTENDVLIVSVGAMSELALDVATRLGAQGISSTVVDPRWVLPVRKSIIALAARHRLVICIEDGVRAGGVGSRIRQEMRAAGVDTALNEVGLPVEFLVHGSRSQVLERVGLTAQKITHDVVAQVLGTKVPFARPLPGQEHPTTGSLPTL.

Residues H73 and 113–115 contribute to the thiamine diphosphate site; that span reads SHA. D145 is a binding site for Mg(2+). Thiamine diphosphate-binding positions include 146 to 147, N175, Y293, and E375; that span reads GA. Mg(2+) is bound at residue N175.

The protein belongs to the transketolase family. DXPS subfamily. Homodimer. It depends on Mg(2+) as a cofactor. Thiamine diphosphate is required as a cofactor.

The enzyme catalyses D-glyceraldehyde 3-phosphate + pyruvate + H(+) = 1-deoxy-D-xylulose 5-phosphate + CO2. The protein operates within metabolic intermediate biosynthesis; 1-deoxy-D-xylulose 5-phosphate biosynthesis; 1-deoxy-D-xylulose 5-phosphate from D-glyceraldehyde 3-phosphate and pyruvate: step 1/1. In terms of biological role, catalyzes the acyloin condensation reaction between C atoms 2 and 3 of pyruvate and glyceraldehyde 3-phosphate to yield 1-deoxy-D-xylulose-5-phosphate (DXP). The chain is 1-deoxy-D-xylulose-5-phosphate synthase from Paenarthrobacter aurescens (strain TC1).